Reading from the N-terminus, the 421-residue chain is Expansin-like protein DDB_G0293186 (421 aa).

The first 20 residues, 1–20 (MRTLKLIILLILSTFKTINS), serve as a signal peptide directing secretion. N-linked (GlcNAc...) asparagine glycosylation is present at Asn-19. One can recognise an Expansin-like EG45 domain in the interval 43 to 139 (GGQCGLPLPG…QKVSCGFSGY (97 aa)). 2 disulfides stabilise this stretch: Cys-46–Cys-70 and Cys-73–Cys-134. N-linked (GlcNAc...) asparagine glycosylation is found at Asn-117 and Asn-391.

Belongs to the expansin family. Expansin A subfamily.

The protein localises to the secreted. In terms of biological role, may serve to lubricate the movement of the cellulose microfibrils during cell growth and wall extension and/or may serve to maintain the fluid state of the slug cell wall. The chain is Expansin-like protein DDB_G0293186 from Dictyostelium discoideum (Social amoeba).